The chain runs to 475 residues: Splicing factor U2AF 65 kDa subunit (475 aa).

The tract at residues 1-90 is disordered; sequence MSDFDEFERQ…RHEKKKKVRK (90 aa). Ser2 bears the N-acetylserine mark. Residue Ser2 is modified to Phosphoserine. The segment at 2–93 is required for interaction with PRPF19; sequence SDFDEFERQL…KKKKVRKYWD (92 aa). A compositionally biased stretch (basic and acidic residues) spans 7–22; the sequence is FERQLNENKQERDKEN. At Lys15 the chain carries 5-hydroxylysine; by JMJD6; alternate. Lys15 is covalently cross-linked (Glycyl lysine isopeptide (Lys-Gly) (interchain with G-Cter in SUMO2); alternate). A necessary and sufficient to stimulate pre-mRNAs 3'-end cleavage in a CFIm complex-dependent manner region spans residues 17–47; sequence ERDKENRHRKRSHSRSRSRDRKRRSRSRDRR. The segment covering 23–46 has biased composition (basic residues); that stretch reads RHRKRSHSRSRSRDRKRRSRSRDR. Residues 47–56 show a composition bias toward basic and acidic residues; it reads RNRDQRSASR. Residue Lys70 forms a Glycyl lysine isopeptide (Lys-Gly) (interchain with G-Cter in SUMO2); alternate linkage. An N6-acetyllysine; alternate modification is found at Lys70. At Ser79 the chain carries Phosphoserine. A compositionally biased stretch (basic residues) spans 79–89; the sequence is SPRHEKKKKVR. RRM domains lie at 149–231, 259–337, and 385–466; these read RRLY…RPHD, HKLF…RASV, and LPEE…YCDP. Lys276 carries the 5-hydroxylysine; by JMJD6 modification. Ser294 is subject to Phosphoserine.

It belongs to the splicing factor SR family. Interacts with U2AF1L4. Heterodimer with U2AF1. Binds unphosphorylated SF1. Interacts with SCAF11 and SNW1. Interacts with ZRSR2/U2AF1-RS2. Interacts with RBM17. Interacts with PRPF19; the interaction is direct. Interacts with POLR2A (via the C-terminal domain); recruits PRPF19 and the Prp19 complex to the pre-mRNA. Interacts with KHDC4 (Isoform 2). Interacts with ZRSR2. Interacts with the SF3B complex composed of SF3B1, SF3B2, SF3B3, SF3B4, SF3B5, SF3B6 and PHF5A. Interacts (via N-terminus) with CPSF7 (via C-terminus); this interaction stimulates pre-mRNA 3'-end processing by promoting the recruitment of the CFIm complex to cleavage and polyadenylation signals. Interacts with ARGLU1; interaction may be involved in ARGLU1-mediated modulation of alternative splicing. Post-translationally, lysyl-hydroxylation at Lys-15 and Lys-276 affects the mRNA splicing activity of the protein, leading to regulate some, but not all, alternative splicing events.

It is found in the nucleus. Functionally, plays a role in pre-mRNA splicing and 3'-end processing. By recruiting PRPF19 and the PRP19C/Prp19 complex/NTC/Nineteen complex to the RNA polymerase II C-terminal domain (CTD), and thereby pre-mRNA, may couple transcription to splicing. Induces cardiac troponin-T (TNNT2) pre-mRNA exon inclusion in muscle. Regulates the TNNT2 exon 5 inclusion through competition with MBNL1. Binds preferentially to a single-stranded structure within the polypyrimidine tract of TNNT2 intron 4 during spliceosome assembly. Required for the export of mRNA out of the nucleus, even if the mRNA is encoded by an intron-less gene. Represses the splicing of MAPT/Tau exon 10. Positively regulates pre-mRNA 3'-end processing by recruiting the CFIm complex to cleavage and polyadenylation signals. In Homo sapiens (Human), this protein is Splicing factor U2AF 65 kDa subunit (U2AF2).